We begin with the raw amino-acid sequence, 195 residues long: Protein GrpE (195 aa).

This sequence belongs to the GrpE family. In terms of assembly, homodimer.

The protein localises to the cytoplasm. Its function is as follows. Participates actively in the response to hyperosmotic and heat shock by preventing the aggregation of stress-denatured proteins, in association with DnaK and GrpE. It is the nucleotide exchange factor for DnaK and may function as a thermosensor. Unfolded proteins bind initially to DnaJ; upon interaction with the DnaJ-bound protein, DnaK hydrolyzes its bound ATP, resulting in the formation of a stable complex. GrpE releases ADP from DnaK; ATP binding to DnaK triggers the release of the substrate protein, thus completing the reaction cycle. Several rounds of ATP-dependent interactions between DnaJ, DnaK and GrpE are required for fully efficient folding. The polypeptide is Protein GrpE (Blochmanniella floridana).